The following is a 272-amino-acid chain: Sulfate transporter CysZ (272 aa).

4 helical membrane passes run 29 to 49 (FVIMPIVLNTVLLCGLFWLFI), 66 to 86 (WLSFLSVILLILSILTILLLF), 148 to 168 (IIALFLLSFIPLVGQTIVPVL), and 219 to 239 (FVPVINLLIMPVAVCGATLMW).

The protein belongs to the CysZ family.

Its subcellular location is the cell inner membrane. In terms of biological role, high affinity, high specificity proton-dependent sulfate transporter, which mediates sulfate uptake. Provides the sulfur source for the cysteine synthesis pathway. The polypeptide is Sulfate transporter CysZ (Haemophilus influenzae (strain ATCC 51907 / DSM 11121 / KW20 / Rd)).